Reading from the N-terminus, the 227-residue chain is UPF0173 metal-dependent hydrolase Bcer98_3294 (227 aa).

Belongs to the UPF0173 family.

This Bacillus cytotoxicus (strain DSM 22905 / CIP 110041 / 391-98 / NVH 391-98) protein is UPF0173 metal-dependent hydrolase Bcer98_3294.